The chain runs to 458 residues: Hyaluronidase conohyal-P1 (458 aa).

Positions 1–18 are cleaved as a signal peptide; the sequence is MRVVVVVTGLVVVVVATA. Residues 24–47 are disordered; it reads HDVKSASSPLSSSSVYQGSSGDDC. Over residues 28–43 the composition is skewed to low complexity; that stretch reads SASSPLSSSSVYQGSS. Cys68 and Cys342 are disulfide-bonded. Residues Asn106 and Asn141 are each glycosylated (N-linked (GlcNAc...) asparagine). The active-site Proton donor is Glu151. Residues Asn261, Asn337, and Asn359 are each glycosylated (N-linked (GlcNAc...) asparagine). The EGF-like domain occupies 363-434; sequence VMADCSTTLC…VRPSRCHKQQ (72 aa). 3 cysteine pairs are disulfide-bonded: Cys367–Cys378, Cys372–Cys411, and Cys413–Cys422.

It belongs to the glycosyl hydrolase 56 family. As to expression, expressed by the venom duct.

Its subcellular location is the secreted. It catalyses the reaction Random hydrolysis of (1-&gt;4)-linkages between N-acetyl-beta-D-glucosamine and D-glucuronate residues in hyaluronate.. Functionally, hyaluronidase catalyzes the hydrolysis of hyaluronic acid (HA), an anionic, nonsulfated glycosaminoglycan distributed widely throughout connective, epithelial, and neural tissues. In venom, they are known to enhance diffusion of the venom by degrading the extracellular matrix. The protein is Hyaluronidase conohyal-P1 of Conus purpurascens (Purple cone).